The primary structure comprises 379 residues: Homoserine O-acetyltransferase (379 aa).

An AB hydrolase-1 domain is found at 52 to 356 (NVVVVLHALT…VYGHDGFLVE (305 aa)). Residue Ser157 is the Nucleophile of the active site. Arg227 contributes to the substrate binding site. Active-site residues include Asp320 and His350. A substrate-binding site is contributed by Asp351.

It belongs to the AB hydrolase superfamily. MetX family. Homodimer.

The protein localises to the cytoplasm. It catalyses the reaction L-homoserine + acetyl-CoA = O-acetyl-L-homoserine + CoA. It functions in the pathway amino-acid biosynthesis; L-methionine biosynthesis via de novo pathway; O-acetyl-L-homoserine from L-homoserine: step 1/1. Functionally, transfers an acetyl group from acetyl-CoA to L-homoserine, forming acetyl-L-homoserine. In Mycobacterium tuberculosis (strain CDC 1551 / Oshkosh), this protein is Homoserine O-acetyltransferase.